Reading from the N-terminus, the 252-residue chain is Probable transcriptional regulatory protein Haur_3030 (252 aa).

This sequence belongs to the TACO1 family.

The protein localises to the cytoplasm. The sequence is that of Probable transcriptional regulatory protein Haur_3030 from Herpetosiphon aurantiacus (strain ATCC 23779 / DSM 785 / 114-95).